The sequence spans 294 residues: Cytidine deaminase (294 aa).

2 CMP/dCMP-type deaminase domains span residues 48–168 (DEDA…FGPK) and 186–294 (LTGD…TLLA). 89–91 (NME) is a binding site for substrate. H102 contributes to the Zn(2+) binding site. E104 functions as the Proton donor in the catalytic mechanism. Zn(2+) contacts are provided by C129 and C132.

Belongs to the cytidine and deoxycytidylate deaminase family. In terms of assembly, homodimer. It depends on Zn(2+) as a cofactor.

The catalysed reaction is cytidine + H2O + H(+) = uridine + NH4(+). It catalyses the reaction 2'-deoxycytidine + H2O + H(+) = 2'-deoxyuridine + NH4(+). This enzyme scavenges exogenous and endogenous cytidine and 2'-deoxycytidine for UMP synthesis. This is Cytidine deaminase from Enterobacter sp. (strain 638).